A 384-amino-acid polypeptide reads, in one-letter code: 8-amino-7-oxononanoate synthase (384 aa).

Arg21 serves as a coordination point for substrate. 108 to 109 (GF) is a binding site for pyridoxal 5'-phosphate. His133 lines the substrate pocket. Ser179, His207, and Thr233 together coordinate pyridoxal 5'-phosphate. Lys236 bears the N6-(pyridoxal phosphate)lysine mark. Thr352 contributes to the substrate binding site.

It belongs to the class-II pyridoxal-phosphate-dependent aminotransferase family. BioF subfamily. Homodimer. Requires pyridoxal 5'-phosphate as cofactor.

The catalysed reaction is 6-carboxyhexanoyl-[ACP] + L-alanine + H(+) = (8S)-8-amino-7-oxononanoate + holo-[ACP] + CO2. It participates in cofactor biosynthesis; biotin biosynthesis. Its function is as follows. Catalyzes the decarboxylative condensation of pimeloyl-[acyl-carrier protein] and L-alanine to produce 8-amino-7-oxononanoate (AON), [acyl-carrier protein], and carbon dioxide. The chain is 8-amino-7-oxononanoate synthase from Escherichia coli O17:K52:H18 (strain UMN026 / ExPEC).